The chain runs to 1052 residues: Multidrug resistance protein MdtB (1052 aa).

The next 11 membrane-spanning stretches (helical) occupy residues 15-37 (LFIL…GIIG), 345-362 (FELL…YLFL), 367-389 (ATII…MYFL), 396-418 (LTLM…VIEN), 438-460 (GEIG…PLLF), 472-494 (FAVT…TPMM), 535-557 (HPWL…YLLI), 867-889 (LWLI…ESFI), 909-931 (LMLT…IGIV), 968-990 (ILMT…GVGA), and 1000-1022 (MVGG…YLLF). The segment at 1032 to 1052 (KNRHRDEDIDSSELLNGQEPQ) is disordered.

Belongs to the resistance-nodulation-cell division (RND) (TC 2.A.6) family. MdtB subfamily. Part of a tripartite efflux system composed of MdtA, MdtB and MdtC. MdtB forms a heteromultimer with MdtC.

Its subcellular location is the cell inner membrane. The polypeptide is Multidrug resistance protein MdtB (Yersinia pestis).